A 373-amino-acid chain; its full sequence is Cell division protein FtsZ 1 (373 aa).

GTP contacts are provided by residues 51–55 (GAGCN), 138–140 (GTG), Glu-169, Arg-173, and Asp-216. Residues 354–373 (EESYFGEEERRPIKLDLDEL) are disordered. Residues 360 to 373 (EEERRPIKLDLDEL) show a composition bias toward basic and acidic residues.

Belongs to the FtsZ family. Homodimer. Polymerizes to form a dynamic ring structure in a strictly GTP-dependent manner. Interacts directly with several other division proteins.

Its subcellular location is the cytoplasm. Essential cell division protein that forms a contractile ring structure (Z ring) at the future cell division site. The regulation of the ring assembly controls the timing and the location of cell division. One of the functions of the FtsZ ring is to recruit other cell division proteins to the septum to produce a new cell wall between the dividing cells. Binds GTP and shows GTPase activity. This Thermococcus kodakarensis (strain ATCC BAA-918 / JCM 12380 / KOD1) (Pyrococcus kodakaraensis (strain KOD1)) protein is Cell division protein FtsZ 1.